The primary structure comprises 448 residues: MLRLFSLALITCLIYYSKNQGPSALVAAVGFGIAGYLATDMLIPRVGKSFIKIGLFGKDLSKPGRPVLPETIGAIPAAVYLFVMFIYIPFIFYKYMVITTSGGGHRDVSVVEDNGMNSNIFPHDKLSEYLSAILCLESTVLLGIADDLFDLRWRHKFFLPAIAAIPLLMVYYVDFGVTHVLIPGFMERWLKKTSVDLGLWYYVYMASMAIFCPNSINILAGVNGLEVGQCIVLAILALLNDLLYFSMGPLATRDSHRFSAVLIIPFLGVSLALWKWNRWPATVFVGDTYCYFAGMVFAVVGILGHFSKTMLLLFIPQIVNFIYSCPQLFKLVPCPRHRLPKFNEKDGLMYPSRANLKEEPPKSIFKPILKLLYCLHLIDLEFDENNEIISTSNMTLINLTLVWFGPMREDKLCNTILKLQFCIGILALLGRHAIGAIIFGHDNLWTVR.

A helical membrane pass occupies residues A24–P44. Residues K58–L60 and E70 contribute to the UDP-N-acetyl-alpha-D-glucosamine site. 2 helical membrane-spanning segments follow: residues I72–F92 and Y129–F149. K156 serves as a coordination point for dolichyl phosphate. The next 2 membrane-spanning stretches (helical) occupy residues F157 to V177 and Y202 to V222. Dolichyl phosphate is bound at residue I210 to I218. N217 serves as a coordination point for Mg(2+). N223 is a UDP-N-acetyl-alpha-D-glucosamine binding site. 4 helical membrane passes run I231–A251, H256–W276, V283–L303, and T309–F329. Position 287 (D287) interacts with Mg(2+). Residue R336 to R338 participates in UDP-N-acetyl-alpha-D-glucosamine binding. Transmembrane regions (helical) follow at residues E387 to M407 and L419 to F439.

Belongs to the glycosyltransferase 4 family. Requires Mg(2+) as cofactor.

The protein resides in the endoplasmic reticulum membrane. The catalysed reaction is a di-trans,poly-cis-dolichyl phosphate + UDP-N-acetyl-alpha-D-glucosamine = an N-acetyl-alpha-D-glucosaminyl-diphospho-di-trans,poly-cis-dolichol + UMP. It participates in protein modification; protein glycosylation. Its activity is regulated as follows. Inhibited by natural nucleoside antibiotic tunicamycin, which acts as a structural analog and competitor of UDP-GlcNAc. Functionally, UDP-N-acetylglucosamine--dolichyl-phosphate N-acetylglucosaminephosphotransferase that operates in the biosynthetic pathway of dolichol-linked oligosaccharides, the glycan precursors employed in protein asparagine (N)-glycosylation. The assembly of dolichol-linked oligosaccharides begins on the cytosolic side of the endoplasmic reticulum membrane and finishes in its lumen. The sequential addition of sugars to dolichol pyrophosphate produces dolichol-linked oligosaccharides containing fourteen sugars, including two GlcNAcs, nine mannoses and three glucoses. Once assembled, the oligosaccharide is transferred from the lipid to nascent proteins by oligosaccharyltransferases. Catalyzes the initial step of dolichol-linked oligosaccharide biosynthesis, transfering GlcNAc-1-P from cytosolic UDP-GlcNAc onto the carrier lipid dolichyl phosphate (P-dolichol), yielding GlcNAc-P-P-dolichol embedded in the cytoplasmic leaflet of the endoplasmic reticulum membrane. This chain is UDP-N-acetylglucosamine--dolichyl-phosphate N-acetylglucosaminephosphotransferase (ALG7), found in Saccharomyces cerevisiae (strain ATCC 204508 / S288c) (Baker's yeast).